Here is a 917-residue protein sequence, read N- to C-terminus: Lipoxygenase 6, chloroplastic (917 aa).

The N-terminal 40 residues, 1–40 (MFVASPVKTNFNGVSLVKSPAFSALSCRKQHRVPISRQVR), are a transit peptide targeting the chloroplast. Over residues 46-57 (EEKAVDQEDGKK) the composition is skewed to basic and acidic residues. Residues 46 to 66 (EEKAVDQEDGKKSTNKPLINS) form a disordered region. The PLAT domain maps to 98–216 (ERFEHQLELF…DNPQARIIFR (119 aa)). One can recognise a Lipoxygenase domain in the interval 219 to 917 (PCLPSETPDG…GRGIPNSISI (699 aa)). Residues His575, His580, His767, and Asn771 each contribute to the Fe cation site. The segment at 880-904 (KDKKLKNRTGAGMPPYELLLPTSPH) is disordered. A Fe cation-binding site is contributed by Ile917.

This sequence belongs to the lipoxygenase family. Fe cation is required as a cofactor.

The protein resides in the plastid. It is found in the chloroplast. The catalysed reaction is (9Z,12Z)-octadecadienoate + O2 = (13S)-hydroperoxy-(9Z,11E)-octadecadienoate. The enzyme catalyses (9Z,12Z,15Z)-octadecatrienoate + O2 = (13S)-hydroperoxy-(9Z,11E,15Z)-octadecatrienoate. It participates in lipid metabolism; oxylipin biosynthesis. In terms of biological role, plant lipoxygenases may be involved in a number of diverse aspects of plant physiology including growth and development, pest resistance, and senescence or responses to wounding. Catalyzes the hydroperoxidation of lipids containing a cis,cis-1,4-pentadiene structure. 13S-lipoxygenase that can use linolenic acid as substrates. In Arabidopsis thaliana (Mouse-ear cress), this protein is Lipoxygenase 6, chloroplastic.